A 125-amino-acid polypeptide reads, in one-letter code: Small ribosomal subunit protein bS6m (125 aa).

It belongs to the bacterial ribosomal protein bS6 family. As to quaternary structure, component of the mitochondrial small ribosomal subunit (mt-SSU). Mature mammalian 55S mitochondrial ribosomes consist of a small (28S) and a large (39S) subunit. The 28S small subunit contains a 12S ribosomal RNA (12S mt-rRNA) and 30 different proteins. The 39S large subunit contains a 16S rRNA (16S mt-rRNA), a copy of mitochondrial valine transfer RNA (mt-tRNA(Val)), which plays an integral structural role, and 52 different proteins.

It is found in the mitochondrion. The protein is Small ribosomal subunit protein bS6m (MRPS6) of Homo sapiens (Human).